Consider the following 547-residue polypeptide: MSQSSGGTSTPTTTATQPTSTSTQTPGTTQLLSTTSTPTTTATQPTSTSTQTPGTTQLPSTTSTPTTTATQPTXTSTQTPGTTQLPGTTSTPTTTATQPTSTSFQTPGTTQLPSSTSTPTTTATQPTSTASQTPGTTQPPGGASSPTTTVTQPTGSSSQTPGTTQPPGGASTPTTTVTQPTGSSSQTSGTTQPPGGASSSTVTSSSSTGSNDPCNSNPCKSPASCVKLYDSYFCLCLEGYYYNNSSSCVKGTTFPGEIGMSVNETTDLEDKNSVNYQTLHSSVVKFFENTFKKTDYGQTVILKVSKDSLMSSRSVMRAATQTVYVSVVNMFGENTKEDEESVASVIKEAVKTDNNVERYFQQDRCDYYGCVKSGSNVCRNGLQCTCKPGLERLNPQVPFCVAPTCSEPCSAEKKQLCLKKDNGAMECGCMAGYRKANGKCEECPFGYSGMDCKDQFQLILTIVGTIAGAFILILLIVFIVSMRSKNKKKSGEEQNLIEDDFHNLRMRPTGFSNFGADTSIFPKVKTGVPSQTSNPYANHRSMPRPDY.

Over residues 1–210 (MSQSSGGTST…TVTSSSSTGS (210 aa)) the composition is skewed to low complexity. Positions 1 to 218 (MSQSSGGTST…GSNDPCNSNP (218 aa)) are disordered. In terms of domain architecture, EGF-like 1 spans 210–249 (SNDPCNSNPCKSPASCVKLYDSYFCLCLEGYYYNNSSSCV). Disulfide bonds link Cys-214–Cys-225, Cys-219–Cys-234, and Cys-236–Cys-248. N-linked (GlcNAc...) asparagine glycosylation is found at Asn-243, Asn-244, and Asn-263. The 117-residue stretch at 250 to 366 (KGTTFPGEIG…ERYFQQDRCD (117 aa)) folds into the SEA domain. 2 consecutive EGF-like domains span residues 361 to 401 (QQDR…PFCV) and 401 to 441 (VAPT…GKCE). Intrachain disulfides connect Cys-365-Cys-378, Cys-370-Cys-384, Cys-386-Cys-400, Cys-409-Cys-427, and Cys-429-Cys-440. The helical transmembrane segment at 459-479 (ILTIVGTIAGAFILILLIVFI) threads the bilayer. Residues 480–547 (VSMRSKNKKK…NHRSMPRPDY (68 aa)) are Cytoplasmic-facing. The interval 525–547 (KTGVPSQTSNPYANHRSMPRPDY) is disordered.

In terms of assembly, homodimer of beta subunits. Post-translationally, cleaved into two subunits, alpha and beta, probably between the first EGF domain and the SEA domain. Beta subunit contains the cytoplasmic tail and alpha subunit the extracellular tail. The homooligomerization into dimers is dependent on intrachain disulfide bonds. In terms of processing, highly glycosylated.

The protein resides in the cell membrane. The protein localises to the secreted. Epithelial and hemopoietic transmembrane mucin that may play a role in cell signaling. This chain is Mucin-13 (Muc13), found in Rattus norvegicus (Rat).